The chain runs to 101 residues: Small ribosomal subunit protein uS14 (101 aa).

Belongs to the universal ribosomal protein uS14 family. In terms of assembly, part of the 30S ribosomal subunit. Contacts proteins S3 and S10.

Binds 16S rRNA, required for the assembly of 30S particles and may also be responsible for determining the conformation of the 16S rRNA at the A site. In Caulobacter sp. (strain K31), this protein is Small ribosomal subunit protein uS14.